The following is a 414-amino-acid chain: tRNA N6-adenosine threonylcarbamoyltransferase, mitochondrial (414 aa).

The N-terminal 29 residues, 1 to 29 (MLILTKTAGVFFKPSKRKVYEFLRSFNFH), are a transit peptide targeting the mitochondrion. An N6-acetyllysine mark is found at K74 and K140. Residues H147 and H151 each contribute to the a divalent metal cation site. Substrate is bound by residues 169 to 173 (LISGG) and D202. K203 carries the post-translational modification N6-acetyllysine. G222 and E226 together coordinate substrate. 3 positions are modified to N6-acetyllysine: K230, K240, and K299. Substrate is bound by residues 329-330 (SN) and T357. D358 serves as a coordination point for a divalent metal cation.

Belongs to the KAE1 / TsaD family. Monomer. A divalent metal cation serves as cofactor. In terms of tissue distribution, widely expressed, with maximum expression in pituitary gland, prostate, rectum and uterus.

Its subcellular location is the mitochondrion. The enzyme catalyses L-threonylcarbamoyladenylate + adenosine(37) in tRNA = N(6)-L-threonylcarbamoyladenosine(37) in tRNA + AMP + H(+). Functionally, required for the formation of a threonylcarbamoyl group on adenosine at position 37 (t(6)A37) in mitochondrial tRNAs that read codons beginning with adenine. Probably involved in the transfer of the threonylcarbamoyl moiety of threonylcarbamoyl-AMP (TC-AMP) to the N6 group of A37. Involved in mitochondrial genome maintenance. The protein is tRNA N6-adenosine threonylcarbamoyltransferase, mitochondrial of Homo sapiens (Human).